The sequence spans 109 residues: Large ribosomal subunit protein uL22 (109 aa).

The protein belongs to the universal ribosomal protein uL22 family. Part of the 50S ribosomal subunit.

Its function is as follows. This protein binds specifically to 23S rRNA; its binding is stimulated by other ribosomal proteins, e.g. L4, L17, and L20. It is important during the early stages of 50S assembly. It makes multiple contacts with different domains of the 23S rRNA in the assembled 50S subunit and ribosome. The globular domain of the protein is located near the polypeptide exit tunnel on the outside of the subunit, while an extended beta-hairpin is found that lines the wall of the exit tunnel in the center of the 70S ribosome. The polypeptide is Large ribosomal subunit protein uL22 (Ralstonia pickettii (strain 12J)).